We begin with the raw amino-acid sequence, 475 residues long: Ribulose bisphosphate carboxylase large chain (475 aa).

The propeptide occupies 1–2 (MS). Pro3 is modified (N-acetylproline). Lys14 carries the post-translational modification N6,N6,N6-trimethyllysine. Residues Asn123 and Thr173 each coordinate substrate. Catalysis depends on Lys175, which acts as the Proton acceptor. Lys177 lines the substrate pocket. 3 residues coordinate Mg(2+): Lys201, Asp203, and Glu204. Residue Lys201 is modified to N6-carboxylysine. Catalysis depends on His294, which acts as the Proton acceptor. Substrate is bound by residues Arg295, His327, and Ser379.

Belongs to the RuBisCO large chain family. Type I subfamily. As to quaternary structure, heterohexadecamer of 8 large chains and 8 small chains; disulfide-linked. The disulfide link is formed within the large subunit homodimers. It depends on Mg(2+) as a cofactor. In terms of processing, the disulfide bond which can form in the large chain dimeric partners within the hexadecamer appears to be associated with oxidative stress and protein turnover.

The protein localises to the plastid. It is found in the chloroplast. The enzyme catalyses 2 (2R)-3-phosphoglycerate + 2 H(+) = D-ribulose 1,5-bisphosphate + CO2 + H2O. The catalysed reaction is D-ribulose 1,5-bisphosphate + O2 = 2-phosphoglycolate + (2R)-3-phosphoglycerate + 2 H(+). Its function is as follows. RuBisCO catalyzes two reactions: the carboxylation of D-ribulose 1,5-bisphosphate, the primary event in carbon dioxide fixation, as well as the oxidative fragmentation of the pentose substrate in the photorespiration process. Both reactions occur simultaneously and in competition at the same active site. This chain is Ribulose bisphosphate carboxylase large chain, found in Larix occidentalis (Western larch).